The sequence spans 462 residues: Cysteine--tRNA ligase (462 aa).

Position 24 (C24) interacts with Zn(2+). A 'HIGH' region motif is present at residues 26–36 (PTVYDDAHLGH). Positions 199, 224, and 228 each coordinate Zn(2+). The 'KMSKS' region motif lies at 256 to 260 (KMSKS). K259 contributes to the ATP binding site.

Belongs to the class-I aminoacyl-tRNA synthetase family. As to quaternary structure, monomer. The cofactor is Zn(2+).

It localises to the cytoplasm. It carries out the reaction tRNA(Cys) + L-cysteine + ATP = L-cysteinyl-tRNA(Cys) + AMP + diphosphate. The protein is Cysteine--tRNA ligase of Campylobacter jejuni subsp. jejuni serotype O:23/36 (strain 81-176).